A 373-amino-acid chain; its full sequence is MASPELSQFRRIVVKVGSALLVDSDKGEVRTSWLAALADDMAKLHKEGRDVLVVSSGSIALGRSRLKLPRGPLKLEESQAAAAVGQIALARIWSEVLGAHGIDAGQILVTLQDTEERRRYLNARSTIGKLLEWRAIPVINENDTVATTEIRYGDNDRLAARVATMASADLLVLLSDIDGLYDAPPKNNPNAKLIPVVDSISSEIEAVAGDAESELSRGGMRTKVEAAKIATTGGTHMLIASGKIEHPLQAIANGGRCTWFLTPANPITSRKRWIAGTLEPKGTLTIDAGAVTALRAGASLLPAGVIKVEGQFARGDAVIVRGPDTSEIGRGLIAYDADDAERIKGRSSPDVMTILGISGRAEMIHRDDLVVGG.

ATP is bound at residue lysine 15. Residues serine 56, aspartate 143, and asparagine 155 each contribute to the substrate site. 175–176 contacts ATP; sequence SD. The PUA domain occupies 281-358; the sequence is KGTLTIDAGA…PDVMTILGIS (78 aa).

Belongs to the glutamate 5-kinase family.

It localises to the cytoplasm. It carries out the reaction L-glutamate + ATP = L-glutamyl 5-phosphate + ADP. It participates in amino-acid biosynthesis; L-proline biosynthesis; L-glutamate 5-semialdehyde from L-glutamate: step 1/2. Catalyzes the transfer of a phosphate group to glutamate to form L-glutamate 5-phosphate. In Bradyrhizobium diazoefficiens (strain JCM 10833 / BCRC 13528 / IAM 13628 / NBRC 14792 / USDA 110), this protein is Glutamate 5-kinase.